The sequence spans 582 residues: MRIIMPVEFSRIVRDVERLIAVEKYSLQGVVDGDKLLVVGFSEGSVNAYLYDGGETVKLNREPINSVLDPHYGVGRVILVRDVSKGAEQHALFKVNTSRPGEEQRLEAVKPMRILSGVDTGEAVVFTGATEDRVALYALDGGGLRELARLPGFGFVSDIRGDLIAGLGFFGGGRVSLFTSNLSSGGLRVFDSGEGSFSSASISPGMKVTAGLETAREARLVTVDPRDGSVEDLELPSKDFSSYRPTAITWLGYLPDGRLAVVARREGRSAVFIDGERVEAPQGNHGRVVLWRGKLVTSHTSLSTPPRIVSLPSGEPLLEGGLPEDLRRSIAGSRLVWVESFDGSRVPTYVLESGRAPTPGPTVVLVHGGPFAEDSDSWDTFAASLAAAGFHVVMPNYRGSTGYGEEWRLKIIGDPCGGELEDVSAAARWARESGLASELYIMGYSYGGYMTLCALTMKPGLFKAGVAGASVVDWEEMYELSDAAFRNFIEQLTGGSREIMRSRSPINHVDRIKEPLALIHPQNDSRTPLKPLLRLMGELLARGKTFEAHIIPDAGHAINTMEDAVKILLPAVFFLATQRERR.

Catalysis depends on charge relay system residues Ser445, Asp524, and His556.

This sequence belongs to the peptidase S9C family.

The protein resides in the cytoplasm. It carries out the reaction Cleavage of an N-acetyl or N-formyl amino acid from the N-terminus of a polypeptide.. Functionally, this enzyme catalyzes the hydrolysis of the N-terminal peptide bond of an N-acetylated peptide to generate an N-acetylated amino acid and a peptide with a free N-terminus. In Aeropyrum pernix (strain ATCC 700893 / DSM 11879 / JCM 9820 / NBRC 100138 / K1), this protein is Acylamino-acid-releasing enzyme.